The primary structure comprises 94 residues: RNA-binding protein Hfq (94 aa).

Residues 9 to 68 (DPFLNALRRERVPVSIYLVNGIKLQGQVESFDQFVILLKNTVSQMVYKHAISTVVPARPF) form the Sm domain. Residues 70–94 (VSAHHSSPAPTPAGGFNGQNDETSE) are disordered.

Belongs to the Hfq family. Homohexamer.

Its function is as follows. RNA chaperone that binds small regulatory RNA (sRNAs) and mRNAs to facilitate mRNA translational regulation in response to envelope stress, environmental stress and changes in metabolite concentrations. Also binds with high specificity to tRNAs. The polypeptide is RNA-binding protein Hfq (Shewanella woodyi (strain ATCC 51908 / MS32)).